Here is a 220-residue protein sequence, read N- to C-terminus: Deoxyribose-phosphate aldolase 1 (220 aa).

D89 functions as the Proton donor/acceptor in the catalytic mechanism. K151 (schiff-base intermediate with acetaldehyde) is an active-site residue. The active-site Proton donor/acceptor is K180.

It belongs to the DeoC/FbaB aldolase family. DeoC type 1 subfamily.

The protein localises to the cytoplasm. The enzyme catalyses 2-deoxy-D-ribose 5-phosphate = D-glyceraldehyde 3-phosphate + acetaldehyde. It functions in the pathway carbohydrate degradation; 2-deoxy-D-ribose 1-phosphate degradation; D-glyceraldehyde 3-phosphate and acetaldehyde from 2-deoxy-alpha-D-ribose 1-phosphate: step 2/2. Catalyzes a reversible aldol reaction between acetaldehyde and D-glyceraldehyde 3-phosphate to generate 2-deoxy-D-ribose 5-phosphate. The sequence is that of Deoxyribose-phosphate aldolase 1 from Mesoplasma florum (strain ATCC 33453 / NBRC 100688 / NCTC 11704 / L1) (Acholeplasma florum).